The chain runs to 373 residues: Probable cysteine protease RD19C (373 aa).

The signal sequence occupies residues 1–20 (MDRVVFFFLIAATLLAGSLG). A propeptide spans 21-139 (STVISGEVTD…QTAPILPTSD (119 aa)) (activation peptide). Intrachain disulfides connect C161–C211 and C195–C245. Residue C164 is part of the active site. N-linked (GlcNAc...) asparagine glycosylation occurs at N258. C301 and C356 are joined by a disulfide. Residues H307 and N334 contribute to the active site.

The protein belongs to the peptidase C1 family.

It localises to the lytic vacuole. Functionally, probable thiol protease. This chain is Probable cysteine protease RD19C, found in Arabidopsis thaliana (Mouse-ear cress).